We begin with the raw amino-acid sequence, 205 residues long: Small ribosomal subunit protein uS4 (205 aa).

Residues 20-44 (WGRPKSPVNRREYGPGQHGQRRKGK) are disordered. Positions 94 to 154 (SRLDAIVYRS…ERSKQLLLVL (61 aa)) constitute an S4 RNA-binding domain.

The protein belongs to the universal ribosomal protein uS4 family. As to quaternary structure, part of the 30S ribosomal subunit. Contacts protein S5. The interaction surface between S4 and S5 is involved in control of translational fidelity.

Functionally, one of the primary rRNA binding proteins, it binds directly to 16S rRNA where it nucleates assembly of the body of the 30S subunit. Its function is as follows. With S5 and S12 plays an important role in translational accuracy. The protein is Small ribosomal subunit protein uS4 of Bartonella bacilliformis (strain ATCC 35685 / KC583 / Herrer 020/F12,63).